Here is a 556-residue protein sequence, read N- to C-terminus: Urocanate hydratase (556 aa).

NAD(+) is bound by residues 52 to 53, Gln-130, 176 to 178, Glu-196, Arg-201, 242 to 243, 263 to 267, 273 to 274, and Tyr-322; these read GG, GMG, NA, QTSAH, and YL. Cys-410 is a catalytic residue. Gly-492 contributes to the NAD(+) binding site.

The protein belongs to the urocanase family. NAD(+) serves as cofactor.

The protein resides in the cytoplasm. The enzyme catalyses 4-imidazolone-5-propanoate = trans-urocanate + H2O. It functions in the pathway amino-acid degradation; L-histidine degradation into L-glutamate; N-formimidoyl-L-glutamate from L-histidine: step 2/3. In terms of biological role, catalyzes the conversion of urocanate to 4-imidazolone-5-propionate. This is Urocanate hydratase from Shewanella sediminis (strain HAW-EB3).